The chain runs to 350 residues: ATPase GET3 (350 aa).

26–33 is an ATP binding site; the sequence is KGGVGKTT. The active site involves Asp57. Residues Glu243 and Asn270 each contribute to the ATP site. Zn(2+) contacts are provided by Cys282 and Cys285.

It belongs to the arsA ATPase family. As to quaternary structure, homodimer. Component of the Golgi to ER traffic (GET) complex, which is composed of GET1, GET2 and GET3. Within the complex, GET1 and GET2 form a heterotetramer which is stabilized by phosphatidylinositol binding and which binds to the GET3 homodimer. Interacts with the chloride channel protein GEF1.

It is found in the cytoplasm. Its subcellular location is the endoplasmic reticulum. It localises to the golgi apparatus. Functionally, ATPase required for the post-translational delivery of tail-anchored (TA) proteins to the endoplasmic reticulum. Recognizes and selectively binds the transmembrane domain of TA proteins in the cytosol. This complex then targets to the endoplasmic reticulum by membrane-bound receptors GET1 and GET2, where the tail-anchored protein is released for insertion. This process is regulated by ATP binding and hydrolysis. ATP binding drives the homodimer towards the closed dimer state, facilitating recognition of newly synthesized TA membrane proteins. ATP hydrolysis is required for insertion. Subsequently, the homodimer reverts towards the open dimer state, lowering its affinity for the GET1-GET2 receptor, and returning it to the cytosol to initiate a new round of targeting. Cooperates with the HDEL receptor ERD2 to mediate the ATP-dependent retrieval of resident ER proteins that contain a C-terminal H-D-E-L retention signal from the Golgi to the ER. Involved in low-level resistance to the oxyanions arsenite and arsenate, and in heat tolerance. The polypeptide is ATPase GET3 (Candida dubliniensis (strain CD36 / ATCC MYA-646 / CBS 7987 / NCPF 3949 / NRRL Y-17841) (Yeast)).